We begin with the raw amino-acid sequence, 396 residues long: Alanine racemase (396 aa).

Residue Lys46 is the Proton acceptor; specific for D-alanine of the active site. Lys46 is subject to N6-(pyridoxal phosphate)lysine. Residue Arg145 coordinates substrate. Tyr280 (proton acceptor; specific for L-alanine) is an active-site residue. Met328 lines the substrate pocket.

It belongs to the alanine racemase family. Pyridoxal 5'-phosphate is required as a cofactor.

The catalysed reaction is L-alanine = D-alanine. Its pathway is amino-acid biosynthesis; D-alanine biosynthesis; D-alanine from L-alanine: step 1/1. Catalyzes the interconversion of L-alanine and D-alanine. May also act on other amino acids. The sequence is that of Alanine racemase (alr) from Brucella ovis (strain ATCC 25840 / 63/290 / NCTC 10512).